The following is a 264-amino-acid chain: S-adenosylmethionine decarboxylase proenzyme (264 aa).

S113 functions as the Schiff-base intermediate with substrate; via pyruvic acid in the catalytic mechanism. Position 113 is a pyruvic acid (Ser); by autocatalysis (S113). H118 functions as the Proton acceptor; for processing activity in the catalytic mechanism. C141 serves as the catalytic Proton donor; for catalytic activity.

The protein belongs to the prokaryotic AdoMetDC family. Type 2 subfamily. Heterooctamer of four alpha and four beta chains arranged as a tetramer of alpha/beta heterodimers. Pyruvate is required as a cofactor. Post-translationally, is synthesized initially as an inactive proenzyme. Formation of the active enzyme involves a self-maturation process in which the active site pyruvoyl group is generated from an internal serine residue via an autocatalytic post-translational modification. Two non-identical subunits are generated from the proenzyme in this reaction, and the pyruvate is formed at the N-terminus of the alpha chain, which is derived from the carboxyl end of the proenzyme. The post-translation cleavage follows an unusual pathway, termed non-hydrolytic serinolysis, in which the side chain hydroxyl group of the serine supplies its oxygen atom to form the C-terminus of the beta chain, while the remainder of the serine residue undergoes an oxidative deamination to produce ammonia and the pyruvoyl group blocking the N-terminus of the alpha chain.

It catalyses the reaction S-adenosyl-L-methionine + H(+) = S-adenosyl 3-(methylsulfanyl)propylamine + CO2. It participates in amine and polyamine biosynthesis; S-adenosylmethioninamine biosynthesis; S-adenosylmethioninamine from S-adenosyl-L-methionine: step 1/1. In terms of biological role, catalyzes the decarboxylation of S-adenosylmethionine to S-adenosylmethioninamine (dcAdoMet), the propylamine donor required for the synthesis of the polyamines spermine and spermidine from the diamine putrescine. This is S-adenosylmethionine decarboxylase proenzyme from Pseudomonas aeruginosa (strain ATCC 15692 / DSM 22644 / CIP 104116 / JCM 14847 / LMG 12228 / 1C / PRS 101 / PAO1).